The chain runs to 237 residues: Ribosomal RNA small subunit methyltransferase G (237 aa).

S-adenosyl-L-methionine is bound by residues G78, F83, 129-130 (AE), and R148. The interval 218–237 (KKETPNKYPRKAGMPNKRPL) is disordered.

This sequence belongs to the methyltransferase superfamily. RNA methyltransferase RsmG family.

The protein resides in the cytoplasm. Functionally, specifically methylates the N7 position of a guanine in 16S rRNA. The protein is Ribosomal RNA small subunit methyltransferase G of Streptococcus pneumoniae (strain ATCC BAA-255 / R6).